We begin with the raw amino-acid sequence, 228 residues long: Eukaryotic translation initiation factor 4E-1 (228 aa).

Over residues Met-1–Lys-19 the composition is skewed to basic and acidic residues. Residues Met-1–Glu-33 form a disordered region. Positions Glu-24 to Glu-33 are enriched in acidic residues. EIF4G-binding regions lie at residues His-53–Glu-56 and Phe-63–His-99. Residues Lys-71 to Gly-76, Lys-103, and Trp-121 to Glu-122 each bind mRNA. Cys-126 and Cys-164 form a disulfide bridge. The tract at residues Tyr-147–Gln-156 is EIF4G-binding. MRNA is bound by residues Arg-171–Lys-176 and Lys-216–Arg-220.

It belongs to the eukaryotic initiation factor 4E family. In terms of assembly, EIF4F is a multi-subunit complex, the composition of which varies with external and internal environmental conditions. It is composed of at least EIF4A, EIF4E and EIF4G. EIF4E is also known to interact with other partners. In higher plants two isoforms of EIF4F have been identified, named isoform EIF4F and isoform EIF(iso)4F. Isoform EIF4F has subunits p220 and p26, whereas isoform EIF(iso)4F has subunits p82 and p28. As to quaternary structure, (Microbial infection) Interacts with potyvirus viral genome-linked protein (VPg); this interaction is possible in susceptible hosts but is impaired in resistant plants. Thus the VPg of tobacco etch virus (TEV) strain HAT interacts with susceptible alleles pvr2(+), pvr2(3) and pvr2(9) but not with the resistant allele pvr2(2), the VPg of TEV strain CAA10 interacts with susceptible alleles pvr2(+), pvr2(2), pvr2(3) and pvr2(9), the VPg of potato virus Y (PVY) strain LYE84 interacts with tomato eIF4E1 and eIF4E2 as well as with the Capsicum annuum eIF4E1 susceptible allele pvr2(+) but not with resistant alleles pvr2(1), pvr2(2), pvr2(3), pvr2(4), pvr2(5), pvr2(6), pvr2(7), pvr2(8) and pvr2(9) and the VPg of PVY strain SON41 interacts with C.annuum eIF4E1 susceptible alleles pvr2(+), pvr2(1), pvr2(2), pvr2(3) and pvr2(4) but not with resistant alleles pvr2(5), pvr2(6), pvr2(7), pvr2(8) and pvr2(9). In addition, the susceptible allele pvr1(+) interacts strongly with TEV strains HAT and NW VPg while resistance alleles (pvr1, pvr1(1), and pvr1(2)) fail to bind TEV VPg. In terms of processing, according to the redox status, the Cys-126-Cys-164 disulfide bridge may have a role in regulating protein function by affecting its ability to bind capped mRNA.

The protein localises to the nucleus. The protein resides in the cytoplasm. Functionally, component of the protein complex eIF4F, which is involved in the recognition of the mRNA cap, ATP-dependent unwinding of 5'-terminal secondary structure and recruitment of mRNA to the ribosome. Recognizes and binds the 7-methylguanosine-containing mRNA cap during an early step in the initiation of protein synthesis and facilitates ribosome binding by inducing the unwinding of the mRNAs secondary structures. Key component of recessive resistance to potyviruses. Its function is as follows. (Microbial infection) Susceptibility host factor required for viral infection (e.g. potato virus Y (PVY) and tobacco etch virus (TEV)) by recruiting viral RNAs to the host ribosomal complex via an interaction with viral genome-linked protein (VPg). The protein is Eukaryotic translation initiation factor 4E-1 of Capsicum annuum (Capsicum pepper).